The chain runs to 250 residues: Ubiquinone/menaquinone biosynthesis C-methyltransferase UbiE (250 aa).

S-adenosyl-L-methionine is bound by residues threonine 74, aspartate 94, 122–123, and serine 139; that span reads DA.

Belongs to the class I-like SAM-binding methyltransferase superfamily. MenG/UbiE family.

The catalysed reaction is a 2-demethylmenaquinol + S-adenosyl-L-methionine = a menaquinol + S-adenosyl-L-homocysteine + H(+). The enzyme catalyses a 2-methoxy-6-(all-trans-polyprenyl)benzene-1,4-diol + S-adenosyl-L-methionine = a 5-methoxy-2-methyl-3-(all-trans-polyprenyl)benzene-1,4-diol + S-adenosyl-L-homocysteine + H(+). It functions in the pathway quinol/quinone metabolism; menaquinone biosynthesis; menaquinol from 1,4-dihydroxy-2-naphthoate: step 2/2. The protein operates within cofactor biosynthesis; ubiquinone biosynthesis. Its function is as follows. Methyltransferase required for the conversion of demethylmenaquinol (DMKH2) to menaquinol (MKH2) and the conversion of 2-polyprenyl-6-methoxy-1,4-benzoquinol (DDMQH2) to 2-polyprenyl-3-methyl-6-methoxy-1,4-benzoquinol (DMQH2). The sequence is that of Ubiquinone/menaquinone biosynthesis C-methyltransferase UbiE from Cereibacter sphaeroides (strain ATCC 17029 / ATH 2.4.9) (Rhodobacter sphaeroides).